The following is a 240-amino-acid chain: Tetrahydromethanopterin S-methyltransferase subunit A (240 aa).

The Cytoplasmic portion of the chain corresponds to 1 to 218; the sequence is MADKREPAPG…KFHSGVHAGK (218 aa). Histidine 85 lines the 5-hydroxybenzimidazolylcob(I)amide pocket. The chain crosses the membrane as a helical span at residues 219–239; it reads VEGAMIGLTITISLLGLLLLG. Position 240 (arginine 240) is a topological domain, extracellular.

The protein belongs to the MtrA family. The complex is composed of 8 subunits; MtrA, MtrB, MtrC, MtrD, MtrE, MtrF, MtrG and MtrH. The cofactor is 5-hydroxybenzimidazolylcob(I)amide.

The protein localises to the cell membrane. The catalysed reaction is 5-methyl-5,6,7,8-tetrahydromethanopterin + coenzyme M + 2 Na(+)(in) = 5,6,7,8-tetrahydromethanopterin + methyl-coenzyme M + 2 Na(+)(out). The protein operates within one-carbon metabolism; methanogenesis from CO(2); methyl-coenzyme M from 5,10-methylene-5,6,7,8-tetrahydromethanopterin: step 2/2. Part of a complex that catalyzes the formation of methyl-coenzyme M and tetrahydromethanopterin from coenzyme M and methyl-tetrahydromethanopterin. This is an energy-conserving, sodium-ion translocating step. In Methanosarcina mazei (strain ATCC BAA-159 / DSM 3647 / Goe1 / Go1 / JCM 11833 / OCM 88) (Methanosarcina frisia), this protein is Tetrahydromethanopterin S-methyltransferase subunit A.